A 107-amino-acid polypeptide reads, in one-letter code: Large ribosomal subunit protein P1 (107 aa).

Positions 68–82 (PATAGAPAAAGAAAP) are enriched in low complexity. The interval 68-107 (PATAGAPAAAGAAAPAEEKKEEKEEEKEESDEDMGFGLFD) is disordered. A compositionally biased stretch (acidic residues) spans 90 to 101 (KEEEKEESDEDM).

This sequence belongs to the eukaryotic ribosomal protein P1/P2 family. In terms of assembly, P1 and P2 exist as dimers at the large ribosomal subunit.

It is found in the cytoplasm. In terms of biological role, plays an important role in the elongation step of protein synthesis. In Penicillium brevicompactum, this protein is Large ribosomal subunit protein P1.